Here is a 1710-residue protein sequence, read N- to C-terminus: Neurexin-2 (1710 aa).

The first 28 residues, 1-28, serve as a signal peptide directing secretion; sequence MALGSRWQPPPQLPPLLLLLALAAGVRG. Residues 29 to 206 enclose the Laminin G-like 1 domain; sequence LEFGGGPGQW…LRGAAADPLC (178 aa). Residues 29-1634 lie on the Extracellular side of the membrane; sequence LEFGGGPGQW…EVIRESSSTT (1606 aa). Asparagine 60 is a glycosylation site (N-linked (GlcNAc...) asparagine). The 41-residue stretch at 202 to 242 folds into the EGF-like 1 domain; that stretch reads ADPLCAPARNPCANGGLCTVLAPGEVGCDCSHTGFGGKFCS. Cystine bridges form between cysteine 206/cysteine 219, cysteine 213/cysteine 229, and cysteine 231/cysteine 241. 2 Laminin G-like domains span residues 289–486 and 493–686; these read VATF…SFRC and DPVT…APFC. A Ca(2+)-binding site is contributed by aspartate 335. Asparagine 338 carries an N-linked (GlcNAc...) asparagine glycan. Leucine 352 and methionine 420 together coordinate Ca(2+). Disulfide bonds link cysteine 450-cysteine 486, cysteine 657-cysteine 686, cysteine 694-cysteine 705, cysteine 699-cysteine 714, and cysteine 716-cysteine 726. Residues 690 to 727 form the EGF-like 2 domain; that stretch reads TLKQCASAPCRNGGICREGWNRFVCDCIGTGFLGRVCE. 2 Laminin G-like domains span residues 732 to 904 and 918 to 1093; these read VLSY…ITYC and DPVT…ERGC. Residues aspartate 779 and leucine 796 each coordinate Ca(2+). The N-linked (GlcNAc...) asparagine glycan is linked to asparagine 841. Residue arginine 854 coordinates Ca(2+). Disulfide bonds link cysteine 1065/cysteine 1093, cysteine 1100/cysteine 1111, cysteine 1105/cysteine 1120, and cysteine 1122/cysteine 1132. The EGF-like 3 domain maps to 1096–1133; the sequence is PSTTCTEESCANQGVCLQQWDGFTCDCTMTSYGGPVCN. The Laminin G-like 6 domain occupies 1137–1345; the sequence is TTYIFGKGGA…HLRLVGEGPS (209 aa). 4 residues coordinate Ca(2+): aspartate 1189, valine 1206, isoleucine 1288, and asparagine 1290. O-linked (Xyl...) (heparan sulfate) serine glycosylation occurs at serine 1400. Disordered stretches follow at residues 1458–1508 and 1587–1621; these read ATQD…LPPT and EPRR…RGPP. A helical membrane pass occupies residues 1635 to 1655; sequence GMVVGIVAAAALCILILLYAM. At 1656-1710 the chain is on the cytoplasmic side; the sequence is YKYRNRDEGSYQVDQSRNYISNSAQSNGAVVKEKAPAAPKTPSKAKKNKDKEYYV. The disordered stretch occupies residues 1677-1710; that stretch reads NSAQSNGAVVKEKAPAAPKTPSKAKKNKDKEYYV.

In terms of assembly, the laminin G-like domain 1 binds to NXPH1. Interacts with PATJ. Interacts with CBLN1, CBLN2 and, less avidly, with CBLN4. Specific isoforms bind neuroligins NLGN1, NLGN2 and NLGN3. Specific isoforms bind to alpha-dystroglycan. Interacts (via Laminin G-like 1 domain) with IGSF21 (Ig-like 1 domain) in a trans-interaction manner. Interacts with CLSTN3. O-glycosylated; contains heparan sulfate. Heparan sulfate attachment is required for synapse development by mediating interactions with neuroligins.

The protein resides in the presynaptic cell membrane. In terms of biological role, neuronal cell surface protein that may be involved in cell recognition and cell adhesion. May mediate intracellular signaling. In Mus musculus (Mouse), this protein is Neurexin-2.